We begin with the raw amino-acid sequence, 127 residues long: Large ribosomal subunit protein bL17 (127 aa).

It belongs to the bacterial ribosomal protein bL17 family. Part of the 50S ribosomal subunit. Contacts protein L32.

This Vibrio vulnificus (strain CMCP6) protein is Large ribosomal subunit protein bL17.